Reading from the N-terminus, the 208-residue chain is Uracil phosphoribosyltransferase (208 aa).

Residues arginine 78, arginine 103, and 130-138 (DPMLATGGS) contribute to the 5-phospho-alpha-D-ribose 1-diphosphate site. Uracil-binding positions include isoleucine 193 and 198–200 (GDA). Aspartate 199 lines the 5-phospho-alpha-D-ribose 1-diphosphate pocket.

Belongs to the UPRTase family. Mg(2+) serves as cofactor.

The enzyme catalyses UMP + diphosphate = 5-phospho-alpha-D-ribose 1-diphosphate + uracil. Its pathway is pyrimidine metabolism; UMP biosynthesis via salvage pathway; UMP from uracil: step 1/1. Its activity is regulated as follows. Allosterically activated by GTP. Functionally, catalyzes the conversion of uracil and 5-phospho-alpha-D-ribose 1-diphosphate (PRPP) to UMP and diphosphate. The sequence is that of Uracil phosphoribosyltransferase from Klebsiella pneumoniae (strain 342).